The primary structure comprises 198 residues: Recombination protein RecR (198 aa).

The C4-type zinc-finger motif lies at Cys-57–Cys-72. Residues Thr-80–Ala-175 form the Toprim domain.

Belongs to the RecR family.

Its function is as follows. May play a role in DNA repair. It seems to be involved in an RecBC-independent recombinational process of DNA repair. It may act with RecF and RecO. This is Recombination protein RecR from Streptococcus pneumoniae serotype 2 (strain D39 / NCTC 7466).